The sequence spans 508 residues: Light-independent protochlorophyllide reductase subunit B (508 aa).

D36 contributes to the [4Fe-4S] cluster binding site. D294 (proton donor) is an active-site residue. 429–430 (GM) contributes to the substrate binding site.

Belongs to the ChlB/BchB/BchZ family. Protochlorophyllide reductase is composed of three subunits; ChlL, ChlN and ChlB. Forms a heterotetramer of two ChlB and two ChlN subunits. It depends on [4Fe-4S] cluster as a cofactor.

The enzyme catalyses chlorophyllide a + oxidized 2[4Fe-4S]-[ferredoxin] + 2 ADP + 2 phosphate = protochlorophyllide a + reduced 2[4Fe-4S]-[ferredoxin] + 2 ATP + 2 H2O. It functions in the pathway porphyrin-containing compound metabolism; chlorophyll biosynthesis (light-independent). Component of the dark-operative protochlorophyllide reductase (DPOR) that uses Mg-ATP and reduced ferredoxin to reduce ring D of protochlorophyllide (Pchlide) to form chlorophyllide a (Chlide). This reaction is light-independent. The NB-protein (ChlN-ChlB) is the catalytic component of the complex. This Gloeothece citriformis (strain PCC 7424) (Cyanothece sp. (strain PCC 7424)) protein is Light-independent protochlorophyllide reductase subunit B.